The following is a 321-amino-acid chain: Phospho-N-acetylmuramoyl-pentapeptide-transferase (321 aa).

10 helical membrane passes run 4 to 24, 51 to 71, 75 to 95, 109 to 129, 139 to 159, 173 to 193, 195 to 215, 222 to 242, 247 to 267, and 297 to 317; these read MVWA…WLIP, TMGG…TVGF, SGVL…DDYI, QKFT…VYGI, GFEV…LLIV, GLAA…ASAG, SDVT…FLFF, MFMG…LALL, LILP…ILQV, and VVYT…LLAM.

This sequence belongs to the glycosyltransferase 4 family. MraY subfamily. Mg(2+) is required as a cofactor.

It localises to the cell membrane. It carries out the reaction UDP-N-acetyl-alpha-D-muramoyl-L-alanyl-gamma-D-glutamyl-meso-2,6-diaminopimeloyl-D-alanyl-D-alanine + di-trans,octa-cis-undecaprenyl phosphate = di-trans,octa-cis-undecaprenyl diphospho-N-acetyl-alpha-D-muramoyl-L-alanyl-D-glutamyl-meso-2,6-diaminopimeloyl-D-alanyl-D-alanine + UMP. It functions in the pathway cell wall biogenesis; peptidoglycan biosynthesis. Its function is as follows. Catalyzes the initial step of the lipid cycle reactions in the biosynthesis of the cell wall peptidoglycan: transfers peptidoglycan precursor phospho-MurNAc-pentapeptide from UDP-MurNAc-pentapeptide onto the lipid carrier undecaprenyl phosphate, yielding undecaprenyl-pyrophosphoryl-MurNAc-pentapeptide, known as lipid I. This is Phospho-N-acetylmuramoyl-pentapeptide-transferase from Heliobacterium modesticaldum (strain ATCC 51547 / Ice1).